An 816-amino-acid polypeptide reads, in one-letter code: MAMWQGAMDNRGFQQGSFSSFQNSSSDEDLMDIPATAMDFSMRDDVPPLDREVGEDKSYNGGGIGSSNRIMDFLEEPIPGVGTYDDFNTIDWVREKSRDRDRHREITNKSKESTWALIHSVSDAFSGWLLMLLIGLLSGSLAGLIDISAHWMTDLKEGICTGGFWFNHEHCCWNSEHVTFEERDKCPEWNSWSQLIISTDEGAFAYIVNYFMYVLWALLFAFLAVSLVKVFAPYACGSGIPEIKTILSGFIIRGYLGKWTLVIKTITLVLAVSSGLSLGKEGPLVHVACCCGNILCHCFNKYRKNEAKRREVLSAAAAAGVSVAFGAPIGGVLFSLEEVSYYFPLKTLWRSFFAALVAAFTLRSINPFGNSRLVLFYVEFHTPWHLFELVPFILLGIFGGLWGALFIRTNIAWCRKRKTTQLGKYPVIEVLVVTAITAILAFPNEYTRMSTSELISELFNDCGLLDSSKLCDYENRFNTSKGGELPDRPAGVGVYSAMWQLALTLILKIVITIFTFGMKIPSGLFIPSMAVGAIAGRLLGVGMEQLAYYHQEWTVFNSWCSQGADCITPGLYAMVGAAACLGGVTRMTVSLVVIMFELTGGLEYIVPLMAAAMTSKWVADALGREGIYDAHIRLNGYPFLEAKEEFAHKTLAMDVMKPRRNDPLLTVLTQDSMTVEDVETIISETTYSGFPVVVSRESQRLVGFVLRRDLIISIENARKKQDGVVSTSIIYFTEHSPPLPPYTPPTLKLRNILDLSPFTVTDLTPMEIVVDIFRKLGLRQCLVTHNGRLLGIITKKDVLKHIAQMANQDPDSILFN.

The interval 1–26 (MAMWQGAMDNRGFQQGSFSSFQNSSS) is disordered. The Cytoplasmic portion of the chain corresponds to 1–124 (MAMWQGAMDN…WALIHSVSDA (124 aa)). Residues 12-25 (GFQQGSFSSFQNSS) are compositionally biased toward low complexity. 2 helical membrane-spanning segments follow: residues 125–162 (FSGW…ICTG) and 208–231 (VNYF…VKVF). Positions 237-241 (GSGIP) match the Selectivity filter part_1 motif. Position 238 (serine 238) interacts with chloride. Positions 240-247 (IPEIKTIL) form an intramembrane region, helical. The next 2 helical transmembrane spans lie at 256-275 (LGKW…VSSG) and 281-300 (EGPL…HCFN). The Selectivity filter part_2 motif lies at 279 to 283 (GKEGP). 2 consecutive intramembrane regions (helical) follow at residues 312-324 (VLSA…VSVA) and 328-336 (PIGGVLFSL). The next 5 membrane-spanning stretches (helical) occupy residues 348-366 (LWRS…RSIN), 389-415 (LVPF…AWCR), 422-442 (LGKY…ILAF), 498-518 (MWQL…TFGM), and 523-542 (GLFI…LGVG). Positions 523–527 (GLFIP) match the Selectivity filter part_3 motif. Phenylalanine 525 contacts chloride. Positions 570 to 584 (GLYAMVGAAACLGGV) form an intramembrane region, helical. The segment at residues 585–587 (TRM) is an intramembrane region (note=Loop between two helices). Positions 588-599 (TVSLVVIMFELT) form an intramembrane region, helical. The segment at residues 600-604 (GGLEY) is an intramembrane region (note=Loop between two helices). Residues 605 to 622 (IVPLMAAAMTSKWVADAL) traverse the membrane as a helical segment. The Cytoplasmic portion of the chain corresponds to 623-816 (GREGIYDAHI…NQDPDSILFN (194 aa)). Tyrosine 628 contributes to the chloride binding site. CBS domains are found at residues 656–720 (MKPR…ARKK) and 752–812 (ILDL…DPDS). Residues threonine 666, 687 to 689 (YSG), and 794 to 797 (TKKD) each bind ATP.

Belongs to the chloride channel (TC 2.A.49) family. ClC-5/CLCN5 subfamily. As to quaternary structure, interacts with NEDD4 and NEDD4L. In terms of processing, ubiquitinated by NEDD4L in the presence of albumin; which promotes endocytosis and proteasomal degradation. As to expression, kidney. Moderately expressed in aortic vascular smooth muscle and endothelial cells, and at a slightly higher level in the coronary vascular smooth muscle.

The protein localises to the golgi apparatus membrane. It localises to the endosome membrane. Its subcellular location is the cell membrane. It catalyses the reaction 2 chloride(in) + H(+)(out) = 2 chloride(out) + H(+)(in). Functionally, proton-coupled chloride transporter. Functions as antiport system and exchanges chloride ions against protons. Important for normal acidification of the endosome lumen. May play an important role in renal tubular function. The CLC channel family contains both chloride channels and proton-coupled anion transporters that exchange chloride or another anion for protons. The absence of conserved gating glutamate residues is typical for family members that function as channels. The protein is H(+)/Cl(-) exchange transporter 5 of Homo sapiens (Human).